A 169-amino-acid chain; its full sequence is Eukaryotic translation initiation factor 5A-2 (169 aa).

K64 carries the post-translational modification Hypusine.

This sequence belongs to the eIF-5A family. Post-translationally, lys-51 undergoes hypusination, a unique post-translational modification that consists in the addition of a butylamino group from spermidine to lysine side chain, leading to the formation of the unusual amino acid hypusine. eIF-5As are the only known proteins to undergo this modification, which is essential for their function.

Its subcellular location is the cytoplasm. It is found in the nucleus. Functionally, translation factor that promotes translation elongation and termination, particularly upon ribosome stalling at specific amino acid sequence contexts. Binds between the exit (E) and peptidyl (P) site of the ribosome and promotes rescue of stalled ribosome: specifically required for efficient translation of polyproline-containing peptides as well as other motifs that stall the ribosome. Acts as a ribosome quality control (RQC) cofactor by joining the RQC complex to facilitate peptidyl transfer during CAT tailing step. This chain is Eukaryotic translation initiation factor 5A-2 (tif51b), found in Schizosaccharomyces pombe (strain 972 / ATCC 24843) (Fission yeast).